Reading from the N-terminus, the 352-residue chain is Homeobox protein Mohawk (352 aa).

A disordered region spans residues 19 to 54; sequence GASERERGGRPYSGVLDSPHARPEVGIPDGPPLKDN. The homeobox; TALE-type DNA-binding region spans 71–132; the sequence is VRHKRQALQD…NARRRLKNTV (62 aa). 2 disordered regions span residues 159-189 and 245-301; these read VSSD…VHHP and TRQR…PSKD.

The protein belongs to the TALE/IRO homeobox family.

It localises to the nucleus. Functionally, may act as a morphogenetic regulator of cell adhesion. The chain is Homeobox protein Mohawk (MKX) from Homo sapiens (Human).